Here is a 446-residue protein sequence, read N- to C-terminus: Gasdermin-A (446 aa).

A triggers pyroptosis region spans residues 1 to 252 (MTMFENVTRA…FILIQASDVG (252 aa)). Position 9-13 (9-13 (RALAR)) interacts with a cardiolipin. The next 4 membrane-spanning stretches (beta stranded) occupy residues 78 to 95 (NFSFKNMLDARVEGDVDV), 99 to 120 (VKVKGTAGLSRSSTLEVQTLSV), 164 to 180 (VTLERAGKAEGCFSLPF), and 184 to 198 (LGLQGSVNHKEAVTI).

Belongs to the gasdermin family. As to quaternary structure, homooligomer; homooligomeric ring-shaped pore complex containing 18-36 subunits when inserted in the membrane. Cleavage by bacterial SpeB relieves autoinhibition by releasing the N-terminal moiety (Gasdermin-A, N-terminal) that initiates pyroptosis. Post-translationally, palmitoylated. As to expression, expressed predominantly in the gastrointestinal (GI) tract and in the skin at a lower level. In the GI tract, the expression is highly restricted to the esophagus and forestomach.

Its subcellular location is the cytoplasm. It is found in the perinuclear region. The protein localises to the cytosol. The protein resides in the cell membrane. With respect to regulation, the full-length protein before cleavage is inactive: intramolecular interactions between N- and C-terminal domains mediate autoinhibition in the absence of activation signal. The intrinsic pyroptosis-inducing activity is carried by the released N-terminal moiety (Gasdermin-A, N-terminal) following cleavage by bacterial effector protein SpeB. This form constitutes the precursor of the pore-forming protein and acts as a sensor of bacterial infection: upon infection, specifically cleaved by bacterial effector protein SpeB in epithelial cells, releasing the N-terminal moiety (Gasdermin-A, N-terminal) that binds to membranes and forms pores, triggering pyroptosis. In terms of biological role, pore-forming protein that causes membrane permeabilization and pyroptosis. Released upon cleavage by bacterial effector protein SpeB, and binds to membrane inner leaflet lipids. Homooligomerizes within the membrane and forms pores of 10-15 nanometers (nm) of inner diameter, triggering pyroptosis. Pyroptosis triggers the elimination of the infected skin cell, depriving the pathogen of its protective niche, while inducing an inflammatory response. This ultimately prevents bacterial penetration of the epithelial barrier and a subsequent systemic dissemination of the pathogen. Binds to cardiolipin and other acidic phospholipids, such as phosphatidylserine, which mediate its targeting to the inner leaflet membrane. The polypeptide is Gasdermin-A (Gsdma) (Mus musculus (Mouse)).